We begin with the raw amino-acid sequence, 213 residues long: Thiamine-phosphate synthase (213 aa).

4-amino-2-methyl-5-(diphosphooxymethyl)pyrimidine-binding positions include 39 to 43 (QLREK) and N71. Positions 72 and 91 each coordinate Mg(2+). Residue S110 participates in 4-amino-2-methyl-5-(diphosphooxymethyl)pyrimidine binding. 136 to 138 (TGT) is a binding site for 2-[(2R,5Z)-2-carboxy-4-methylthiazol-5(2H)-ylidene]ethyl phosphate. Residue K139 coordinates 4-amino-2-methyl-5-(diphosphooxymethyl)pyrimidine. 2-[(2R,5Z)-2-carboxy-4-methylthiazol-5(2H)-ylidene]ethyl phosphate contacts are provided by residues G166 and 186-187 (VS).

This sequence belongs to the thiamine-phosphate synthase family. The cofactor is Mg(2+).

It carries out the reaction 2-[(2R,5Z)-2-carboxy-4-methylthiazol-5(2H)-ylidene]ethyl phosphate + 4-amino-2-methyl-5-(diphosphooxymethyl)pyrimidine + 2 H(+) = thiamine phosphate + CO2 + diphosphate. The enzyme catalyses 2-(2-carboxy-4-methylthiazol-5-yl)ethyl phosphate + 4-amino-2-methyl-5-(diphosphooxymethyl)pyrimidine + 2 H(+) = thiamine phosphate + CO2 + diphosphate. The catalysed reaction is 4-methyl-5-(2-phosphooxyethyl)-thiazole + 4-amino-2-methyl-5-(diphosphooxymethyl)pyrimidine + H(+) = thiamine phosphate + diphosphate. It participates in cofactor biosynthesis; thiamine diphosphate biosynthesis; thiamine phosphate from 4-amino-2-methyl-5-diphosphomethylpyrimidine and 4-methyl-5-(2-phosphoethyl)-thiazole: step 1/1. In terms of biological role, condenses 4-methyl-5-(beta-hydroxyethyl)thiazole monophosphate (THZ-P) and 2-methyl-4-amino-5-hydroxymethyl pyrimidine pyrophosphate (HMP-PP) to form thiamine monophosphate (TMP). This chain is Thiamine-phosphate synthase, found in Clostridium botulinum (strain Eklund 17B / Type B).